We begin with the raw amino-acid sequence, 85 residues long: UPF0386 protein MXAN_1729 (85 aa).

The protein belongs to the UPF0386 family.

The chain is UPF0386 protein MXAN_1729 from Myxococcus xanthus (strain DK1622).